The following is a 79-amino-acid chain: Sec-independent protein translocase protein TatA (79 aa).

Residues methionine 1–glycine 21 traverse the membrane as a helical segment. Residues valine 43 to glycine 79 are disordered. The span at threonine 69 to glycine 79 shows a compositional bias: basic and acidic residues.

Belongs to the TatA/E family. As to quaternary structure, the Tat system comprises two distinct complexes: a TatABC complex, containing multiple copies of TatA, TatB and TatC subunits, and a separate TatA complex, containing only TatA subunits. Substrates initially bind to the TatABC complex, which probably triggers association of the separate TatA complex to form the active translocon.

It localises to the cell inner membrane. Part of the twin-arginine translocation (Tat) system that transports large folded proteins containing a characteristic twin-arginine motif in their signal peptide across membranes. TatA could form the protein-conducting channel of the Tat system. This chain is Sec-independent protein translocase protein TatA, found in Delftia acidovorans (strain DSM 14801 / SPH-1).